The chain runs to 120 residues: Ribonuclease P protein component 2 (120 aa).

It belongs to the eukaryotic/archaeal RNase P protein component 2 family. As to quaternary structure, consists of a catalytic RNA component and at least 4-5 protein subunits. Forms a subcomplex with Rnp3 which stimulates the catalytic RNA.

Its subcellular location is the cytoplasm. It carries out the reaction Endonucleolytic cleavage of RNA, removing 5'-extranucleotides from tRNA precursor.. In terms of biological role, part of ribonuclease P, a protein complex that generates mature tRNA molecules by cleaving their 5'-ends. The RNA is catalytic, but its KM for pre-tRNA is 170-fold decreased in the presence of the 4 known protein subunits (Rnp1-4). The protein subunits also decrease the amount of Mg(2+) needed for activity. In Pyrococcus furiosus (strain ATCC 43587 / DSM 3638 / JCM 8422 / Vc1), this protein is Ribonuclease P protein component 2.